Here is a 363-residue protein sequence, read N- to C-terminus: Eukaryotic translation initiation factor 3 subunit H (363 aa).

The region spanning 13-163 is the MPN domain; it reads VQVEALVVMK…LRAFRLSTAF (151 aa).

Belongs to the eIF-3 subunit H family. Component of the eukaryotic translation initiation factor 3 (eIF-3) complex.

It is found in the cytoplasm. Its function is as follows. Component of the eukaryotic translation initiation factor 3 (eIF-3) complex, which is involved in protein synthesis of a specialized repertoire of mRNAs and, together with other initiation factors, stimulates binding of mRNA and methionyl-tRNAi to the 40S ribosome. The eIF-3 complex specifically targets and initiates translation of a subset of mRNAs involved in cell proliferation. This chain is Eukaryotic translation initiation factor 3 subunit H, found in Pyricularia oryzae (strain 70-15 / ATCC MYA-4617 / FGSC 8958) (Rice blast fungus).